Reading from the N-terminus, the 193-residue chain is Protein GrpE (193 aa).

Residues 1–40 are disordered; the sequence is MTEENRPQPDQPELTVTSESSVQETGENKARTPEQEGEAM. Over residues 14–25 the composition is skewed to polar residues; it reads LTVTSESSVQET.

This sequence belongs to the GrpE family. As to quaternary structure, homodimer.

The protein resides in the cytoplasm. In terms of biological role, participates actively in the response to hyperosmotic and heat shock by preventing the aggregation of stress-denatured proteins, in association with DnaK and GrpE. It is the nucleotide exchange factor for DnaK and may function as a thermosensor. Unfolded proteins bind initially to DnaJ; upon interaction with the DnaJ-bound protein, DnaK hydrolyzes its bound ATP, resulting in the formation of a stable complex. GrpE releases ADP from DnaK; ATP binding to DnaK triggers the release of the substrate protein, thus completing the reaction cycle. Several rounds of ATP-dependent interactions between DnaJ, DnaK and GrpE are required for fully efficient folding. The chain is Protein GrpE from Nitrosospira multiformis (strain ATCC 25196 / NCIMB 11849 / C 71).